A 237-amino-acid chain; its full sequence is Uridylate kinase (237 aa).

An ATP-binding site is contributed by 10–13 (KLSG). A UMP-binding site is contributed by Gly-51. Gly-52 and Arg-56 together coordinate ATP. UMP-binding positions include Asp-71 and 133–140 (TGNPCFTT). Residues Thr-160, Tyr-166, and Asp-169 each coordinate ATP.

This sequence belongs to the UMP kinase family. As to quaternary structure, homohexamer.

It localises to the cytoplasm. The catalysed reaction is UMP + ATP = UDP + ADP. Its pathway is pyrimidine metabolism; CTP biosynthesis via de novo pathway; UDP from UMP (UMPK route): step 1/1. Inhibited by UTP. Functionally, catalyzes the reversible phosphorylation of UMP to UDP. In Vesicomyosocius okutanii subsp. Calyptogena okutanii (strain HA), this protein is Uridylate kinase.